The chain runs to 374 residues: Glutamate 5-kinase (374 aa).

K16 contributes to the ATP binding site. 3 residues coordinate substrate: S56, D143, and N155. ATP contacts are provided by residues 175-176 (TD) and 217-223 (SGGMLTK). The PUA domain maps to 282–360 (RGALILDDGA…SNIGAILGYK (79 aa)).

It belongs to the glutamate 5-kinase family.

The protein localises to the cytoplasm. The catalysed reaction is L-glutamate + ATP = L-glutamyl 5-phosphate + ADP. It participates in amino-acid biosynthesis; L-proline biosynthesis; L-glutamate 5-semialdehyde from L-glutamate: step 1/2. Functionally, catalyzes the transfer of a phosphate group to glutamate to form L-glutamate 5-phosphate. In Marinomonas sp. (strain MWYL1), this protein is Glutamate 5-kinase.